A 1170-amino-acid chain; its full sequence is DNA-directed RNA polymerase subunit beta' (1170 aa).

Zn(2+)-binding residues include C60, C62, C75, and C78. Residues D449, D451, and D453 each coordinate Mg(2+). Zn(2+) is bound by residues C774, C848, C855, and C858. Residues 1145–1170 (EPGEENGEPGGERLYGMDELYGETAN) form a disordered region.

The protein belongs to the RNA polymerase beta' chain family. In terms of assembly, the RNAP catalytic core consists of 2 alpha, 1 beta, 1 beta' and 1 omega subunit. When a sigma factor is associated with the core the holoenzyme is formed, which can initiate transcription. It depends on Mg(2+) as a cofactor. Zn(2+) serves as cofactor.

It catalyses the reaction RNA(n) + a ribonucleoside 5'-triphosphate = RNA(n+1) + diphosphate. Its function is as follows. DNA-dependent RNA polymerase catalyzes the transcription of DNA into RNA using the four ribonucleoside triphosphates as substrates. This Pelotomaculum thermopropionicum (strain DSM 13744 / JCM 10971 / SI) protein is DNA-directed RNA polymerase subunit beta'.